A 756-amino-acid chain; its full sequence is Xylosyl- and glucuronyltransferase LARGE1 (756 aa).

Topologically, residues 1–10 (MLGICRGRRK) are cytoplasmic. The helical; Signal-anchor for type II membrane protein transmembrane segment at 11–31 (FLAASLTLLCIPAITWIYLFA) threads the bilayer. The Lumenal segment spans residues 32 to 756 (GSFEDGKPVS…LKYLTAENNS (725 aa)). 2 disordered regions span residues 43-64 (SPLE…ERES) and 82-108 (QLSL…EEGT). Polar residues predominate over residues 44–58 (PLESQAHSPRYTASS). Residues 53–95 (RYTASSQRERESLEVRVREVEEENRALRRQLSLAQGQSPAHHR) adopt a coiled-coil conformation. 3 N-linked (GlcNAc...) asparagine glycosylation sites follow: asparagine 97, asparagine 122, and asparagine 148. The segment at 138-413 (IHVAIVCAGY…FLEYDGNLLR (276 aa)) is xylosyltransferase activity. Mn(2+) is bound by residues aspartate 242 and aspartate 244. Residue asparagine 272 is glycosylated (N-linked (GlcNAc...) asparagine). The tract at residues 414–756 (RELFGCPSET…LKYLTAENNS (343 aa)) is glucuronyltransferase activity. Positions 563 and 565 each coordinate Mn(2+).

This sequence in the C-terminal section; belongs to the glycosyltransferase 49 family. The protein in the N-terminal section; belongs to the glycosyltransferase 8 family. Interacts with DAG1 (via the N-terminal domain of alpha-DAG1); the interaction increases binding of DAG1 to laminin. Interacts with B4GAT1. Mn(2+) is required as a cofactor. Ubiquitous. Highest expression in heart, diaphragm and brain, where it is especially found in cerebral cortex, hippocampus, and trigeminal ganglion.

Its subcellular location is the golgi apparatus membrane. It catalyses the reaction 3-O-[beta-D-GlcA-(1-&gt;3)-beta-D-Xyl-(1-&gt;4)-Rib-ol-P-Rib-ol-P-3-beta-D-GalNAc-(1-&gt;3)-beta-D-GlcNAc-(1-&gt;4)-(O-6-P-alpha-D-Man)]-Thr-[protein] + UDP-alpha-D-xylose = 3-O-[alpha-D-Xyl-(1-&gt;3)-beta-D-GlcA-(1-&gt;4)-beta-D-Xyl-(1-&gt;4)-Rib-ol-P-Rib-ol-P-3-beta-D-GalNAc-(1-&gt;3)-beta-D-GlcNAc-(1-&gt;4)-(O-6-P-alpha-D-Man)]-Thr-[protein] + UDP + H(+). It carries out the reaction 3-O-{(1-&gt;[3)-alpha-D-Xyl-(1-&gt;3)-beta-D-GlcA-(1-&gt;](n)-4)-beta-D-Xyl-(1-&gt;4)-Rib-ol-P-Rib-ol-P-3-beta-D-GalNAc-(1-&gt;3)-beta-D-GlcNAc-(1-&gt;4)-O-6-P-alpha-D-Man}-L-Thr-[protein] + UDP-alpha-D-glucuronate = 3-O-{beta-D-GlcA-(1-&gt;[3)-alpha-D-Xyl-(1-&gt;3)-beta-D-GlcA-(1-&gt;](n)-4)-beta-D-Xyl-(1-&gt;4)-Rib-ol-P-Rib-ol-P-3-beta-D-GalNAc-(1-&gt;3)-beta-D-GlcNAc-(1-&gt;4)-O-6-P-alpha-D-Man}-L-Thr-[protein] + UDP + H(+). The catalysed reaction is 3-O-{beta-D-GlcA-(1-&gt;[3)-alpha-D-Xyl-(1-&gt;3)-beta-D-GlcA-(1-&gt;](n)-4)-beta-D-Xyl-(1-&gt;4)-Rib-ol-P-Rib-ol-P-3-beta-D-GalNAc-(1-&gt;3)-beta-D-GlcNAc-(1-&gt;4)-O-6-P-alpha-D-Man}-L-Thr-[protein] + UDP-alpha-D-xylose = 3-O-{(1-&gt;[3)-alpha-D-Xyl-(1-&gt;3)-beta-D-GlcA-(1-&gt;](n+1)-4)-beta-D-Xyl-(1-&gt;4)-Rib-ol-P-Rib-ol-P-3-beta-D-GalNAc-(1-&gt;3)-beta-D-GlcNAc-(1-&gt;4)-O-6-P-alpha-D-Man}-L-Thr-[protein] + UDP + H(+). Its pathway is protein modification; protein glycosylation. Bifunctional glycosyltransferase with both alpha-1,3-xylosyltransferase and beta-1,3-glucuronyltransferase activities involved in the maturation of alpha-dystroglycan (DAG1) by glycosylation leading to DAG1 binding to laminin G-like domain-containing extracellular proteins with high affinity. Elongates the glucuronyl-beta-1,4-xylose-beta disaccharide primer structure initiated by B4GAT1 by adding repeating units [-3-Xylose-alpha-1,3-GlcA-beta-1-] to produce a heteropolysaccharide. Requires the phosphorylation of core M3 (O-mannosyl trisaccharide) by POMK to elongate the glucuronyl-beta-1,4-xylose-beta disaccharide primer. Plays a key role in skeletal muscle function and regeneration. In Mus musculus (Mouse), this protein is Xylosyl- and glucuronyltransferase LARGE1.